The chain runs to 153 residues: Fimbrial protein EcpC (153 aa).

A propeptide spans 1–8 (leader sequence); it reads MLKQVQKG. Phe9 carries the post-translational modification N-methylphenylalanine. The chain crosses the membrane as a helical span at residues 9–29; sequence FTLIELMIVIAIIGILAAIAL. Cys130 and Cys143 are joined by a disulfide.

The protein belongs to the N-Me-Phe pilin family.

The protein localises to the fimbrium. It is found in the membrane. In Eikenella corrodens, this protein is Fimbrial protein EcpC (ecpC).